The chain runs to 122 residues: Large ribosomal subunit protein uL14 (122 aa).

This sequence belongs to the universal ribosomal protein uL14 family. Part of the 50S ribosomal subunit. Forms a cluster with proteins L3 and L19. In the 70S ribosome, L14 and L19 interact and together make contacts with the 16S rRNA in bridges B5 and B8.

Functionally, binds to 23S rRNA. Forms part of two intersubunit bridges in the 70S ribosome. The chain is Large ribosomal subunit protein uL14 from Syntrophomonas wolfei subsp. wolfei (strain DSM 2245B / Goettingen).